We begin with the raw amino-acid sequence, 502 residues long: Probable cytosol aminopeptidase (502 aa).

Mn(2+) is bound by residues lysine 269 and aspartate 274. Lysine 281 is an active-site residue. Mn(2+) contacts are provided by aspartate 292, aspartate 351, and glutamate 353. Residue arginine 355 is part of the active site.

It belongs to the peptidase M17 family. Mn(2+) serves as cofactor.

It is found in the cytoplasm. The catalysed reaction is Release of an N-terminal amino acid, Xaa-|-Yaa-, in which Xaa is preferably Leu, but may be other amino acids including Pro although not Arg or Lys, and Yaa may be Pro. Amino acid amides and methyl esters are also readily hydrolyzed, but rates on arylamides are exceedingly low.. It catalyses the reaction Release of an N-terminal amino acid, preferentially leucine, but not glutamic or aspartic acids.. Presumably involved in the processing and regular turnover of intracellular proteins. Catalyzes the removal of unsubstituted N-terminal amino acids from various peptides. This is Probable cytosol aminopeptidase from Aliivibrio fischeri (strain MJ11) (Vibrio fischeri).